Consider the following 370-residue polypeptide: Isopentenyl-diphosphate delta-isomerase (370 aa).

8–9 provides a ligand contact to substrate; it reads RK. Residues Thr-65, 66-68, Ser-99, and Asn-127 each bind FMN; that span reads GMT. 99–101 lines the substrate pocket; the sequence is SQR. Gln-166 contacts substrate. Glu-167 serves as a coordination point for Mg(2+). Residues Lys-198, Ser-223, Thr-228, 277–279, and 298–299 contribute to the FMN site; these read GMR and AL.

It belongs to the IPP isomerase type 2 family. Homooctamer. Dimer of tetramers. FMN is required as a cofactor. It depends on NADPH as a cofactor. The cofactor is Mg(2+).

It localises to the cytoplasm. The catalysed reaction is isopentenyl diphosphate = dimethylallyl diphosphate. Involved in the biosynthesis of isoprenoids. Catalyzes the 1,3-allylic rearrangement of the homoallylic substrate isopentenyl (IPP) to its allylic isomer, dimethylallyl diphosphate (DMAPP). The chain is Isopentenyl-diphosphate delta-isomerase from Pyrococcus abyssi (strain GE5 / Orsay).